The following is a 100-amino-acid chain: Urease subunit gamma (100 aa).

It belongs to the urease gamma subunit family. In terms of assembly, heterotrimer of UreA (gamma), UreB (beta) and UreC (alpha) subunits. Three heterotrimers associate to form the active enzyme.

It localises to the cytoplasm. It carries out the reaction urea + 2 H2O + H(+) = hydrogencarbonate + 2 NH4(+). The protein operates within nitrogen metabolism; urea degradation; CO(2) and NH(3) from urea (urease route): step 1/1. The sequence is that of Urease subunit gamma from Cyanothece sp. (strain PCC 7425 / ATCC 29141).